The primary structure comprises 625 residues: Folylpolyglutamate synthase (625 aa).

An ATP-binding site is contributed by 141–144; the sequence is GKGS. Mg(2+)-binding residues include Ser165, Glu234, and His262. The ATP site is built by Arg384 and Asp414.

It belongs to the folylpolyglutamate synthase family. A monovalent cation serves as cofactor.

Its subcellular location is the mitochondrion inner membrane. It localises to the mitochondrion matrix. The catalysed reaction is (6S)-5,6,7,8-tetrahydrofolyl-(gamma-L-Glu)(n) + L-glutamate + ATP = (6S)-5,6,7,8-tetrahydrofolyl-(gamma-L-Glu)(n+1) + ADP + phosphate + H(+). It participates in cofactor biosynthesis; tetrahydrofolylpolyglutamate biosynthesis. In terms of biological role, catalyzes conversion of folates to polyglutamate derivatives allowing concentration of folate compounds in the cell and the intracellular retention of these cofactors, which are important substrates for most of the folate-dependent enzymes that are involved in one-carbon transfer reactions involved in purine, pyrimidine and amino acid synthesis. Essential for organellar and whole-plant folate homeostasis. This chain is Folylpolyglutamate synthase, found in Arabidopsis thaliana (Mouse-ear cress).